The chain runs to 116 residues: Large ribosomal subunit protein bL17 (116 aa).

The protein belongs to the bacterial ribosomal protein bL17 family. Part of the 50S ribosomal subunit. Contacts protein L32.

The chain is Large ribosomal subunit protein bL17 from Prochlorococcus marinus (strain MIT 9301).